The sequence spans 195 residues: Peptidyl-tRNA hydrolase (195 aa).

Y14 serves as a coordination point for tRNA. Residue H19 is the Proton acceptor of the active site. Residues Y64 and N66 each contribute to the tRNA site.

The protein belongs to the PTH family. In terms of assembly, monomer.

Its subcellular location is the cytoplasm. The enzyme catalyses an N-acyl-L-alpha-aminoacyl-tRNA + H2O = an N-acyl-L-amino acid + a tRNA + H(+). Its function is as follows. Hydrolyzes ribosome-free peptidyl-tRNAs (with 1 or more amino acids incorporated), which drop off the ribosome during protein synthesis, or as a result of ribosome stalling. Functionally, catalyzes the release of premature peptidyl moieties from peptidyl-tRNA molecules trapped in stalled 50S ribosomal subunits, and thus maintains levels of free tRNAs and 50S ribosomes. This chain is Peptidyl-tRNA hydrolase, found in Desulforudis audaxviator (strain MP104C).